A 360-amino-acid chain; its full sequence is Zinc metalloproteinase nas-5 (360 aa).

The first 21 residues, 1-21, serve as a signal peptide directing secretion; sequence MDIKQLLLSIILTVSVVNGRG. The region spanning 61–269 is the Peptidase M12A domain; sequence NALLSNSPLR…KKVCAIYHCS (209 aa). Asn108 carries an N-linked (GlcNAc...) asparagine glycan. Cystine bridges form between Cys111-Cys268 and Cys134-Cys157. A Zn(2+)-binding site is contributed by His165. Glu166 is an active-site residue. 2 residues coordinate Zn(2+): His169 and His175. The region spanning 299–336 is the PLAC domain; that stretch reads QGDSCTDRLGICPMLKSREMLNCKVMATFCCSSCSAPT.

Zn(2+) serves as cofactor.

It localises to the secreted. Functionally, metalloprotease. The chain is Zinc metalloproteinase nas-5 (nas-5) from Caenorhabditis elegans.